A 671-amino-acid chain; its full sequence is UvrABC system protein B (671 aa).

The Helicase ATP-binding domain occupies 25-412 (EGIEAGLAHQ…AGRVVEQVVR (388 aa)). 38 to 45 (GVTGSGKT) contributes to the ATP binding site. Positions 91-114 (YYDYYQPEAYVPSSDTFIEKDASI) match the Beta-hairpin motif. Residues 429–582 (QVDDLLSEIT…QIAFNLANGI (154 aa)) form the Helicase C-terminal domain. The disordered stretch occupies residues 601 to 623 (PGSRSKKRKGMAKAAEENARYEN). Residues 614–623 (AAEENARYEN) show a composition bias toward basic and acidic residues. In terms of domain architecture, UVR spans 632–667 (TKRIRQLEEKMYQLARDLEFEAAAQMRDEITKLRER).

It belongs to the UvrB family. Forms a heterotetramer with UvrA during the search for lesions. Interacts with UvrC in an incision complex.

The protein resides in the cytoplasm. In terms of biological role, the UvrABC repair system catalyzes the recognition and processing of DNA lesions. A damage recognition complex composed of 2 UvrA and 2 UvrB subunits scans DNA for abnormalities. Upon binding of the UvrA(2)B(2) complex to a putative damaged site, the DNA wraps around one UvrB monomer. DNA wrap is dependent on ATP binding by UvrB and probably causes local melting of the DNA helix, facilitating insertion of UvrB beta-hairpin between the DNA strands. Then UvrB probes one DNA strand for the presence of a lesion. If a lesion is found the UvrA subunits dissociate and the UvrB-DNA preincision complex is formed. This complex is subsequently bound by UvrC and the second UvrB is released. If no lesion is found, the DNA wraps around the other UvrB subunit that will check the other stand for damage. This is UvrABC system protein B from Pseudomonas fluorescens (strain ATCC BAA-477 / NRRL B-23932 / Pf-5).